Here is a 346-residue protein sequence, read N- to C-terminus: Heparan sulfate glucosamine 3-O-sulfotransferase 5 (346 aa).

Residues 1-12 (MLFKQQAWLRQK) are Cytoplasmic-facing. A helical; Signal-anchor for type II membrane protein transmembrane segment spans residues 13–32 (LLVLGSLAVGSLLYLVARVG). At 33–346 (SLDRLQPICP…QITGRTLNWP (314 aa)) the chain is on the lumenal side. Position 100–104 (100–104 (KGGTR)) interacts with 3'-phosphoadenylyl sulfate. Residues 122–128 (EIHFFDN) and 155–158 (KSPA) contribute to the substrate site. The 3'-phosphoadenylyl sulfate site is built by arginine 183 and serine 191. 226 to 227 (YK) serves as a coordination point for substrate. An N-linked (GlcNAc...) asparagine glycan is attached at asparagine 287. Residue tyrosine 293 participates in 3'-phosphoadenylyl sulfate binding. A disulfide bond links cysteine 294 and cysteine 304. 309-313 (KGRIH) is a 3'-phosphoadenylyl sulfate binding site.

Belongs to the sulfotransferase 1 family. As to expression, highly expressed in skeletal muscle and fetal brain, and also found in adult brain, spinal cord, cerebellum and colon.

The protein localises to the golgi apparatus membrane. It carries out the reaction alpha-D-glucosaminyl-[heparan sulfate](n) + 3'-phosphoadenylyl sulfate = 3-sulfo-alpha-D-glucosaminyl-[heparan sulfate](n) + adenosine 3',5'-bisphosphate + H(+). In terms of biological role, sulfotransferase that utilizes 3'-phospho-5'-adenylyl sulfate (PAPS) to catalyze the transfer of a sulfo group to position 3 of glucosamine residues in heparan. Catalyzes the rate limiting step in the biosynthesis of heparan sulfate (HSact). This modification is a crucial step in the biosynthesis of anticoagulant heparan sulfate as it completes the structure of the antithrombin pentasaccharide binding site. Also generates GlcUA-GlcNS or IdoUA-GlcNS and IdoUA2S-GlcNH2. The substrate-specific O-sulfation generates an enzyme-modified heparan sulfate which acts as a binding receptor to Herpes simplex virus-1 (HSV-1) and permits its entry. This Homo sapiens (Human) protein is Heparan sulfate glucosamine 3-O-sulfotransferase 5 (HS3ST5).